Reading from the N-terminus, the 176-residue chain is Ribosome maturation factor RimM (176 aa).

A PRC barrel domain is found at 95–169 (EDEVYLFELE…TARIAPPPGL (75 aa)).

The protein belongs to the RimM family. Binds ribosomal protein uS19.

It is found in the cytoplasm. An accessory protein needed during the final step in the assembly of 30S ribosomal subunit, possibly for assembly of the head region. Essential for efficient processing of 16S rRNA. May be needed both before and after RbfA during the maturation of 16S rRNA. It has affinity for free ribosomal 30S subunits but not for 70S ribosomes. The sequence is that of Ribosome maturation factor RimM from Nitratidesulfovibrio vulgaris (strain ATCC 29579 / DSM 644 / CCUG 34227 / NCIMB 8303 / VKM B-1760 / Hildenborough) (Desulfovibrio vulgaris).